Here is a 628-residue protein sequence, read N- to C-terminus: Beta-lactamase-like protein 1 (628 aa).

An N-terminal signal peptide occupies residues 1 to 28 (MKNILSFSFSFSFLYILFLLLFLNNNLL). Residues N45, N68, N198, and N241 are each glycosylated (N-linked (GlcNAc...) asparagine). The span at 245–281 (NNNNNNNNNNNNNNNNNNNNNNNNNNNNNNNNNNNNN) shows a compositional bias: low complexity. The interval 245 to 285 (NNNNNNNNNNNNNNNNNNNNNNNNNNNNNNNNNNNNNKIKT) is disordered. N313 and N335 each carry an N-linked (GlcNAc...) asparagine glycan. Residues 494–516 (EKEEKEEEEENQQDESQQQQQQQ) form a disordered region. The span at 496 to 506 (EEKEEEEENQQ) shows a compositional bias: acidic residues. The segment covering 507-516 (DESQQQQQQQ) has biased composition (low complexity).

The protein belongs to the beta-lactamase family.

It is found in the secreted. In Dictyostelium discoideum (Social amoeba), this protein is Beta-lactamase-like protein 1.